The chain runs to 340 residues: Protein RecA (340 aa).

Residue 65-72 coordinates ATP; the sequence is GPESGGKT.

The protein belongs to the RecA family.

The protein resides in the cytoplasm. Functionally, can catalyze the hydrolysis of ATP in the presence of single-stranded DNA, the ATP-dependent uptake of single-stranded DNA by duplex DNA, and the ATP-dependent hybridization of homologous single-stranded DNAs. It interacts with LexA causing its activation and leading to its autocatalytic cleavage. The protein is Protein RecA of Thermus thermophilus (strain ATCC 27634 / DSM 579 / HB8).